Reading from the N-terminus, the 118-residue chain is Down syndrome critical region protein 4 (118 aa).

Positions 1–39 are disordered; that stretch reads MSLIILTRDDEPRIFTPDSDAASPALHSTSPLPDPASAS. The span at 28–39 shows a compositional bias: low complexity; it reads STSPLPDPASAS.

As to expression, mainly expressed in placenta.

In Homo sapiens (Human), this protein is Down syndrome critical region protein 4 (DSCR4).